Here is a 252-residue protein sequence, read N- to C-terminus: Probable phosphatase SO_1652 (252 aa).

9 residues coordinate Zn(2+): His-8, His-10, His-16, His-41, Glu-74, His-102, His-132, Asp-193, and His-195.

This sequence belongs to the PHP family. Requires Zn(2+) as cofactor.

This is Probable phosphatase SO_1652 from Shewanella oneidensis (strain ATCC 700550 / JCM 31522 / CIP 106686 / LMG 19005 / NCIMB 14063 / MR-1).